Reading from the N-terminus, the 485-residue chain is Dual specificity protein phosphatase CDC14B (485 aa).

The segment at Met1–Glu38 is disordered. Residues Met1 to Asp54 carry the Nucleolar localization signal motif. Residues Pro15–Val28 are compositionally biased toward low complexity. The interval Gln44–Asn198 is a. The tract at residues Ser199–Glu212 is linker. A b region spans residues Asn213–Arg379. Residues Asp215 to Phe374 form the Tyrosine-protein phosphatase domain. Residue Cys314 is the Phosphocysteine intermediate of the active site. A disordered region spans residues Leu402 to Gly424. Residues Asp409–Val422 show a composition bias toward acidic residues.

It belongs to the protein-tyrosine phosphatase family. Non-receptor class CDC14 subfamily. Interacts with FZR1/CDH1.

The protein localises to the nucleus. The protein resides in the nucleolus. Its subcellular location is the nucleoplasm. It carries out the reaction O-phospho-L-tyrosyl-[protein] + H2O = L-tyrosyl-[protein] + phosphate. It catalyses the reaction O-phospho-L-seryl-[protein] + H2O = L-seryl-[protein] + phosphate. The catalysed reaction is O-phospho-L-threonyl-[protein] + H2O = L-threonyl-[protein] + phosphate. Its function is as follows. Dual-specificity phosphatase involved in DNA damage response. Essential regulator of the G2 DNA damage checkpoint: following DNA damage, translocates to the nucleus and dephosphorylates FZR1/CDH1, a key activator of the anaphase promoting complex/cyclosome (APC/C). Dephosphorylates SIRT2 around early anaphase. Dephosphorylation of FZR1/CDH1 activates the APC/C, leading to the ubiquitination of PLK1, preventing entry into mitosis. Preferentially dephosphorylates proteins modified by proline-directed kinases. The chain is Dual specificity protein phosphatase CDC14B (Cdc14b) from Mus musculus (Mouse).